The following is a 108-amino-acid chain: Guanine nucleotide-binding protein subunit gamma (108 aa).

Residue Cys104 is the site of S-palmitoyl cysteine attachment. Cys105 is modified (cysteine methyl ester). Cys105 carries S-farnesyl cysteine lipidation. Positions 106–108 (VIS) are cleaved as a propeptide — removed in mature form.

The protein belongs to the G protein gamma family. In terms of assembly, g proteins are composed of 3 units, alpha, beta and gamma.

It localises to the membrane. The polypeptide is Guanine nucleotide-binding protein subunit gamma (Yarrowia lipolytica (strain CLIB 122 / E 150) (Yeast)).